Consider the following 150-residue polypeptide: Depactin (150 aa).

Residues 3–148 (SGTALDENVK…SEEAIGDKIK (146 aa)) form the ADF-H domain.

This sequence belongs to the actin-binding proteins ADF family.

Its function is as follows. Depactin interacts with actin at some of its 12 N-terminal residues and 20 C-terminal residues. Binds to actin monomers from filaments and in solution. The chain is Depactin from Asterias amurensis (Northern Pacific seastar).